The following is a 297-amino-acid chain: Homoserine kinase (297 aa).

82 to 92 lines the ATP pocket; the sequence is PLTRGLGSSAS.

This sequence belongs to the GHMP kinase family. Homoserine kinase subfamily.

Its subcellular location is the cytoplasm. It catalyses the reaction L-homoserine + ATP = O-phospho-L-homoserine + ADP + H(+). Its pathway is amino-acid biosynthesis; L-threonine biosynthesis; L-threonine from L-aspartate: step 4/5. Its function is as follows. Catalyzes the ATP-dependent phosphorylation of L-homoserine to L-homoserine phosphate. The protein is Homoserine kinase of Bacillus cereus (strain ATCC 10987 / NRS 248).